We begin with the raw amino-acid sequence, 149 residues long: Myoglobin (149 aa).

N-acetylalanine is present on Ala2. Residues 2-143 (ABWDKVNSVW…ICSDIEKEYK (142 aa)) enclose the Globin domain. Residue His89 participates in heme b binding.

This sequence belongs to the globin family. Monomeric.

It is found in the cytoplasm. Its subcellular location is the sarcoplasm. It catalyses the reaction Fe(III)-heme b-[protein] + nitric oxide + H2O = Fe(II)-heme b-[protein] + nitrite + 2 H(+). The catalysed reaction is H2O2 + AH2 = A + 2 H2O. In terms of biological role, monomeric heme protein which primary function is to store oxygen and facilitate its diffusion within muscle tissues. Reversibly binds oxygen through a pentacoordinated heme iron and enables its timely and efficient release as needed during periods of heightened demand. Depending on the oxidative conditions of tissues and cells, and in addition to its ability to bind oxygen, it also has a nitrite reductase activity whereby it regulates the production of bioactive nitric oxide. Under stress conditions, like hypoxia and anoxia, it also protects cells against reactive oxygen species thanks to its pseudoperoxidase activity. This is Myoglobin (mb) from Hemitriakis japanica (Japanese topeshark).